Reading from the N-terminus, the 238-residue chain is Probable transcriptional regulatory protein SMU_1789c (238 aa).

Belongs to the TACO1 family. YeeN subfamily.

It is found in the cytoplasm. This is Probable transcriptional regulatory protein SMU_1789c from Streptococcus mutans serotype c (strain ATCC 700610 / UA159).